The primary structure comprises 442 residues: Sexual development regulator VELC (442 aa).

Disordered stretches follow at residues methionine 1–alanine 192 and lysine 396–serine 442. Residues isoleucine 45–proline 54 are compositionally biased toward pro residues. A compositionally biased stretch (low complexity) spans proline 79 to glycine 97. In terms of domain architecture, Velvet spans phenylalanine 213–lysine 396. Over residues lysine 401–serine 411 the composition is skewed to gly residues. Residues alanine 433 to serine 442 show a composition bias toward basic residues.

It belongs to the velvet family. VelC subfamily.

It is found in the nucleus. Velvet-domain-containing protein that acts as a positive regulator of sexual development. Plays an important role in pathogenicity through regulating positively appressorium-mediated penetration and invasive growth. In Pyricularia oryzae (strain 70-15 / ATCC MYA-4617 / FGSC 8958) (Rice blast fungus), this protein is Sexual development regulator VELC.